A 235-amino-acid chain; its full sequence is MAMFFKKNDDRMFPIEGAPRRKRTNFFTFPSLQKLHQNAKLNDGDNDEVFSPEPSSGESIDLDISPLTPPDGSDDYSDVEDGGAEEGDSDPPIKPVRAARLGERCCAGLKRTSSTSTASTSSGSNDGGDCNYYAPPAKKPAPIHGNPLGGKRRPELDLSPKIENRSDSSSRESTTSSDSWDYVNNKDNPSRGQGNENPSASDSLGALQAACIHQDHAMPTTPPVKGGEDYPWPWN.

A disordered region spans residues Gln37 to Asn235. Residues Gly72 to Ser89 show a composition bias toward acidic residues. The segment covering Thr112–Ser124 has biased composition (low complexity). Residues Arg152–Ser170 show a composition bias toward basic and acidic residues. Over residues Asn185–Asp202 the composition is skewed to polar residues.

The protein belongs to the herpesviridae BKRF4 family.

This is an uncharacterized protein from Alcelaphine herpesvirus 1 (strain C500) (AlHV-1).